The chain runs to 508 residues: WD repeat-containing protein JIP5 (508 aa).

WD repeat units lie at residues 46–94 (LATG…GVET), 105–144 (RHKG…VVKK), 150–189 (GQNV…QTNL), 194–234 (HNGD…EGDF), 252–293 (DQED…LADQ), and 344–381 (SKLD…QLTP). The interval 372–508 (DSEKSEQLTP…THGIRRFEGL (137 aa)) is disordered. A compositionally biased stretch (basic and acidic residues) spans 491 to 508 (IKPERSMKTHGIRRFEGL).

Belongs to the WD repeat WDR55 family.

Its subcellular location is the nucleus. The protein localises to the nucleolus. The protein is WD repeat-containing protein JIP5 (JIP5) of Eremothecium gossypii (strain ATCC 10895 / CBS 109.51 / FGSC 9923 / NRRL Y-1056) (Yeast).